Consider the following 324-residue polypeptide: tRNA dimethylallyltransferase (324 aa).

An ATP-binding site is contributed by 20–27 (GPTASGKS). A substrate-binding site is contributed by 22–27 (TASGKS). 3 interaction with substrate tRNA regions span residues 45–48 (DSAL), 168–172 (QRLIR), and 284–291 (KRQITWLR).

This sequence belongs to the IPP transferase family. In terms of assembly, monomer. The cofactor is Mg(2+).

The catalysed reaction is adenosine(37) in tRNA + dimethylallyl diphosphate = N(6)-dimethylallyladenosine(37) in tRNA + diphosphate. Catalyzes the transfer of a dimethylallyl group onto the adenine at position 37 in tRNAs that read codons beginning with uridine, leading to the formation of N6-(dimethylallyl)adenosine (i(6)A). This chain is tRNA dimethylallyltransferase, found in Hydrogenovibrio crunogenus (strain DSM 25203 / XCL-2) (Thiomicrospira crunogena).